We begin with the raw amino-acid sequence, 551 residues long: Prunin 1 Pru du 6.0101 (551 aa).

Positions 1-20 are cleaved as a signal peptide; sequence MAKAFVFSLCLLLVFNGCLA. 2 cysteine pairs are disulfide-bonded: cysteine 32/cysteine 65 and cysteine 108/cysteine 374. Residues 37–312 form the Cupin type-1 1 domain; that stretch reads LQAREPDNRI…ALNVNEETAR (276 aa). 3 disordered regions span residues 111–194, 238–293, and 311–361; these read TFEE…QKTR, NPRK…NVFS, and ARNL…QQQG. Low complexity-rich tracts occupy residues 114 to 124, 132 to 148, and 168 to 185; these read ESQQSSQQGRQ, QQQQ…QQEQ, and QEQQ…QQFR. IgE-binding regions lie at residues 118–132, 145–159, 161–175, and 225–239; these read SSQQ…QERQ, QQEQ…QQGR, QQEE…QGQQ, and LFHV…DQNP. Low complexity predominate over residues 254-275; that stretch reads QQGQSQPRQQGEQGRPGQHQQP. The igE-binding stretch occupies residues 281–295; it reads QQEQQGSGNNVFSGF. Polar residues-rich tracts occupy residues 282–293 and 311–323; these read QEQQGSGNNVFS and ARNL…NRNQ. The segment covering 339-350 has biased composition (basic and acidic residues); that stretch reads GRQEREHEERQQ. The span at 351–361 shows a compositional bias: low complexity; the sequence is EQLQQERQQQG. The NGXEET; peptidase recognition motif signature appears at 367–372; sequence NGLEET. Residues 380–529 enclose the Cupin type-1 2 domain; sequence ENIGNPERAD…AYQISREQAR (150 aa). Residues 510-524 form an igE-binding region; the sequence is RALPDEVLANAYQIS.

This sequence belongs to the 11S seed storage protein (globulins) family. As to quaternary structure, hexamer of two trimers; each subunit is composed of an acidic and a basic chain derived from a single precursor and linked by a disulfide bond. In terms of processing, proteolytically processed from a single precursor to produce an acidic and a basic chain that are linked by a disulfide bond. As to expression, expressed in seed (at protein level).

Seed storage protein. The polypeptide is Prunin 1 Pru du 6.0101 (Prunus dulcis (Almond)).